We begin with the raw amino-acid sequence, 87 residues long: Beta-mammal toxin Css4 (87 aa).

The N-terminal stretch at 1–19 (MNSLLMITACLALVGTVWA) is a signal peptide. Residues 20 to 85 (KEGYLVNSYT…VWPLPNKTCN (66 aa)) enclose the LCN-type CS-alpha/beta domain. Intrachain disulfides connect C31–C84, C35–C60, C44–C65, and C48–C67. N85 carries the asparagine amide modification.

Belongs to the long (4 C-C) scorpion toxin superfamily. Sodium channel inhibitor family. Beta subfamily. As to expression, expressed by the venom gland.

Its subcellular location is the secreted. Its function is as follows. Beta toxins bind voltage-independently at site-4 of sodium channels (Nav) and shift the voltage of activation toward more negative potentials thereby affecting sodium channel activation and promoting spontaneous and repetitive firing. This toxin is active only on mammals. The chain is Beta-mammal toxin Css4 from Centruroides suffusus (Durango bark scorpion).